We begin with the raw amino-acid sequence, 304 residues long: Homoserine kinase (304 aa).

Residue 90–100 (PLARGLGSSAS) participates in ATP binding.

The protein belongs to the GHMP kinase family. Homoserine kinase subfamily.

It localises to the cytoplasm. It catalyses the reaction L-homoserine + ATP = O-phospho-L-homoserine + ADP + H(+). It functions in the pathway amino-acid biosynthesis; L-threonine biosynthesis; L-threonine from L-aspartate: step 4/5. Functionally, catalyzes the ATP-dependent phosphorylation of L-homoserine to L-homoserine phosphate. In Staphylococcus aureus (strain MSSA476), this protein is Homoserine kinase.